The chain runs to 318 residues: Protein-methionine-sulfoxide reductase catalytic subunit MsrP (318 aa).

The tat-type signal signal peptide spans 1–40 (MNRFTRYDVTPEAIFNQRRQIIKAMGLGAAALSLPNIGFA). Mo-molybdopterin-binding positions include Asn72, 75-76 (YE), Cys130, Thr165, Asn217, Arg222, and 233-235 (SIK).

It belongs to the MsrP family. In terms of assembly, heterodimer of a catalytic subunit (MsrP) and a heme-binding subunit (MsrQ). Mo-molybdopterin is required as a cofactor. In terms of processing, predicted to be exported by the Tat system. The position of the signal peptide cleavage has not been experimentally proven.

Its subcellular location is the periplasm. It catalyses the reaction L-methionyl-[protein] + a quinone + H2O = L-methionyl-(S)-S-oxide-[protein] + a quinol. The enzyme catalyses L-methionyl-[protein] + a quinone + H2O = L-methionyl-(R)-S-oxide-[protein] + a quinol. Part of the MsrPQ system that repairs oxidized periplasmic proteins containing methionine sulfoxide residues (Met-O), using respiratory chain electrons. Thus protects these proteins from oxidative-stress damage caused by reactive species of oxygen and chlorine generated by the host defense mechanisms. MsrPQ is essential for the maintenance of envelope integrity under bleach stress, rescuing a wide series of structurally unrelated periplasmic proteins from methionine oxidation. The catalytic subunit MsrP is non-stereospecific, being able to reduce both (R-) and (S-) diastereoisomers of methionine sulfoxide. This chain is Protein-methionine-sulfoxide reductase catalytic subunit MsrP, found in Actinobacillus pleuropneumoniae serotype 5b (strain L20).